A 213-amino-acid polypeptide reads, in one-letter code: Imidazole glycerol phosphate synthase subunit HisH (213 aa).

One can recognise a Glutamine amidotransferase type-1 domain in the interval 4-211 (NLGLIDYGMG…LTWLRNGAEP (208 aa)). C82 (nucleophile) is an active-site residue. Residues H186 and E188 contribute to the active site.

As to quaternary structure, heterodimer of HisH and HisF.

Its subcellular location is the cytoplasm. The enzyme catalyses 5-[(5-phospho-1-deoxy-D-ribulos-1-ylimino)methylamino]-1-(5-phospho-beta-D-ribosyl)imidazole-4-carboxamide + L-glutamine = D-erythro-1-(imidazol-4-yl)glycerol 3-phosphate + 5-amino-1-(5-phospho-beta-D-ribosyl)imidazole-4-carboxamide + L-glutamate + H(+). It carries out the reaction L-glutamine + H2O = L-glutamate + NH4(+). It participates in amino-acid biosynthesis; L-histidine biosynthesis; L-histidine from 5-phospho-alpha-D-ribose 1-diphosphate: step 5/9. IGPS catalyzes the conversion of PRFAR and glutamine to IGP, AICAR and glutamate. The HisH subunit catalyzes the hydrolysis of glutamine to glutamate and ammonia as part of the synthesis of IGP and AICAR. The resulting ammonia molecule is channeled to the active site of HisF. The protein is Imidazole glycerol phosphate synthase subunit HisH of Synechococcus sp. (strain CC9605).